A 201-amino-acid chain; its full sequence is Anthranilate synthase component II (201 aa).

The region spanning 3–196 (DILLLDNIDS…LAWAQRKLEP (194 aa)) is the Glutamine amidotransferase type-1 domain. Residue 57 to 59 (GPG) participates in L-glutamine binding. C84 acts as the Nucleophile; for GATase activity in catalysis. L-glutamine contacts are provided by residues Q88 and 134-135 (SL). Active-site for GATase activity residues include H170 and E172.

In terms of assembly, tetramer of two components I and two components II.

The catalysed reaction is chorismate + L-glutamine = anthranilate + pyruvate + L-glutamate + H(+). The enzyme catalyses N-(5-phospho-beta-D-ribosyl)anthranilate + diphosphate = 5-phospho-alpha-D-ribose 1-diphosphate + anthranilate. It functions in the pathway amino-acid biosynthesis; L-tryptophan biosynthesis; L-tryptophan from chorismate: step 1/5. It participates in amino-acid biosynthesis; L-tryptophan biosynthesis; L-tryptophan from chorismate: step 2/5. The polypeptide is Anthranilate synthase component II (trpG-TRPD) (Shigella dysenteriae).